The primary structure comprises 109 residues: MSKAMGETLGRLEAVIHDRLAAGEAEASYVASLAAKGRGKIAQKLGEEAVEAVIAAVSEDDPALIGEASDLVFHLSILLAERGLTWDAIAAELDRRHGTSGHTEKAARA.

Belongs to the PRA-PH family.

It is found in the cytoplasm. The enzyme catalyses 1-(5-phospho-beta-D-ribosyl)-ATP + H2O = 1-(5-phospho-beta-D-ribosyl)-5'-AMP + diphosphate + H(+). Its pathway is amino-acid biosynthesis; L-histidine biosynthesis; L-histidine from 5-phospho-alpha-D-ribose 1-diphosphate: step 2/9. The polypeptide is Phosphoribosyl-ATP pyrophosphatase (Sphingopyxis alaskensis (strain DSM 13593 / LMG 18877 / RB2256) (Sphingomonas alaskensis)).